A 694-amino-acid chain; its full sequence is Lon-like protease BrxL (694 aa).

The protein belongs to the BrxL family.

In terms of biological role, BREX systems (bacteriophage exclusion) provide immunity against bacteriophage. Part of a type 1 BREX system which protects against dsDNA phage. This system allows phage adsorption but prevents phage DNA replication, without degradation of the phage DNA. Methylation of bacterial DNA by PglX guides self/non-self discrimination. When the brxA-brxB-brxC-pglX-pglZ-brxL genes are transformed into a susceptible E.coli strain (BW25113) they confer very high resistance to infection by bacteriophage VR7 and VpaE1, about 100-fold protection against lambda, T5 and T7 and no protection against RNA phage Qbeta, ssDNA phage M13 or dSDNA phage T4 and VR5. Glycosylated phage DNA is not susceptible to BREX. The BREX system does not confer resistance to lysogenic lambda phage, i.e. prophage that are integrated into the chromosomal DNA and then induced to form phage. Expression of this protein alone is toxic. The sequence is that of Lon-like protease BrxL from Escherichia coli O9:H4 (strain HS).